A 386-amino-acid chain; its full sequence is Acetate kinase (386 aa).

N7 contacts Mg(2+). K14 serves as a coordination point for ATP. Residue R78 coordinates substrate. The active-site Proton donor/acceptor is D135. Residues 195–199, 268–270, and 316–320 each bind ATP; these read HLGNG, DMR, and GIGEN. E370 contacts Mg(2+).

This sequence belongs to the acetokinase family. In terms of assembly, homodimer. Mg(2+) serves as cofactor. Requires Mn(2+) as cofactor.

The protein localises to the cytoplasm. The catalysed reaction is acetate + ATP = acetyl phosphate + ADP. It participates in metabolic intermediate biosynthesis; acetyl-CoA biosynthesis; acetyl-CoA from acetate: step 1/2. Catalyzes the formation of acetyl phosphate from acetate and ATP. Can also catalyze the reverse reaction. This chain is Acetate kinase, found in Pseudarthrobacter chlorophenolicus (strain ATCC 700700 / DSM 12829 / CIP 107037 / JCM 12360 / KCTC 9906 / NCIMB 13794 / A6) (Arthrobacter chlorophenolicus).